We begin with the raw amino-acid sequence, 673 residues long: Protein kinase ORF74 (673 aa).

The region spanning 128 to 404 (TDTDEAVARG…ARELLVYPRY (277 aa)) is the Protein kinase domain. Asp252 serves as the catalytic Proton acceptor. The tract at residues 340–364 (MDNDALDSRRTGRDGDPVNPEGFGT) is disordered. The segment covering 345-355 (LDSRRTGRDGD) has biased composition (basic and acidic residues).

The protein belongs to the protein kinase superfamily. Ser/Thr protein kinase family.

The catalysed reaction is L-seryl-[protein] + ATP = O-phospho-L-seryl-[protein] + ADP + H(+). It carries out the reaction L-threonyl-[protein] + ATP = O-phospho-L-threonyl-[protein] + ADP + H(+). The chain is Protein kinase ORF74 (ORF74) from Ictalurid herpesvirus 1 (strain Auburn) (IcHV-1).